Here is a 247-residue protein sequence, read N- to C-terminus: Particulate methane monooxygenase beta subunit (247 aa).

6 consecutive transmembrane segments (helical) span residues 23 to 43 (WMAL…HAML), 59 to 79 (LWVT…QSYL), 86 to 106 (PWGA…NRYF), 111 to 131 (WTYF…AIIL), 145 to 165 (AIVG…PIIA), and 215 to 235 (VSAF…HFIG).

As to quaternary structure, m.capsulatus has two forms of methane monooxygenase, a soluble (sMMO) and a membrane-bound (particulate) type (pMMO). The particulate type is a nonamer composed of three alpha:beta:gamma heterotrimeric protomers assembled into a cylindrical structure; the beta and gamma subunits comprise the bulk of the membrane-spanning regions and the soluble regions are derived primarily from alpha subunits which form two antiparallel beta-barrel-like structures each. This assembly, also called pMMO hydroxylase (pMMO-H), is proposed to associate with methanol dehydrogenase (MDH), also designated as pMMO-R, to form the pMMO-C complex which seems to have greater methane monooxygenase activity.

The protein resides in the membrane. The catalysed reaction is methane + a quinol + O2 = methanol + a quinone + H2O. Non-catalytic subunit of the methane monooxygenase that is responsible for the initial oxygenation of methane to methanol in methanotrophs. At least in vitro, specific quinols can replace NADH as reductants. This chain is Particulate methane monooxygenase beta subunit (pmoA1), found in Methylococcus capsulatus (strain ATCC 33009 / NCIMB 11132 / Bath).